The following is a 181-amino-acid chain: Inner membrane-spanning protein YciB (181 aa).

Helical transmembrane passes span 8 to 28 (FPII…ATAA), 53 to 73 (ITLI…NAIF), 76 to 96 (WKPT…HFFG), 121 to 141 (LSWA…VYNF), and 149 to 169 (FKLF…AFYI).

It belongs to the YciB family.

It is found in the cell inner membrane. Plays a role in cell envelope biogenesis, maintenance of cell envelope integrity and membrane homeostasis. In Coxiella burnetii (strain CbuG_Q212) (Coxiella burnetii (strain Q212)), this protein is Inner membrane-spanning protein YciB.